Reading from the N-terminus, the 392-residue chain is Nucleosome assembly protein 1-like 1-A (392 aa).

Residues 1-37 form a disordered region; sequence MANIDNKGQTELDQQDMEDVEDVEEEETGEDANSKAR. Residues 13–30 show a composition bias toward acidic residues; that stretch reads DQQDMEDVEDVEEEETGE. The NAP1L motif motif lies at 126–150; that stretch reads YEPTEEECEWKVEEEDISGDLKEKA. The Nuclear localization signal motif lies at 273–279; the sequence is IKKKQKH. The span at 346–377 shows a compositional bias: acidic residues; sequence AIEDDDDDYDEEGEEADDEEGEEEADEDNDPD. Residues 346–392 are disordered; sequence AIEDDDDDYDEEGEEADDEEGEEEADEDNDPDYEPKKGQNPAECKQQ.

Belongs to the nucleosome assembly protein (NAP) family. In terms of assembly, forms homomultimers. Interacts with histone B4. Interacts with the B-type cyclins ccnb1 and ccnb2. Phosphorylated by cyclin B-cdc2 kinase complexes. Initially expressed throughout the embryo with expression higher at the animal pole. Becomes localized to presumptive ectoderm by gastrula stages. By stage 18 (neurula), expressed in the neural plate and posterior to the cement gland. In late neurula/early tailbud stages, expressed in the neural crest, neural tube, eyes, tailbud and ventral blood islands. Adult expression is predominantly in ovaries.

The protein resides in the cytoplasm. It is found in the nucleus. In terms of biological role, acts as a chaperone for the linker histone to facilitate deposition of histone B4 onto linker DNA. Required for both remodeling of sperm chromatin into nucleosomes, and linker histone binding to nucleosome core dimers. Plays a role in tissue-specific gene regulation. Required for primitive hemopoiesis, acting upstream of tal1/scl. The polypeptide is Nucleosome assembly protein 1-like 1-A (nap1l1-a) (Xenopus laevis (African clawed frog)).